The chain runs to 359 residues: Phosphate acyltransferase (359 aa).

The interval 338–359 is disordered; it reads AGGVQSAPETEAPGAHPSPHVA.

The protein belongs to the PlsX family. In terms of assembly, homodimer. Probably interacts with PlsY.

The protein localises to the cytoplasm. It catalyses the reaction a fatty acyl-[ACP] + phosphate = an acyl phosphate + holo-[ACP]. Its pathway is lipid metabolism; phospholipid metabolism. Catalyzes the reversible formation of acyl-phosphate (acyl-PO(4)) from acyl-[acyl-carrier-protein] (acyl-ACP). This enzyme utilizes acyl-ACP as fatty acyl donor, but not acyl-CoA. The protein is Phosphate acyltransferase of Cupriavidus taiwanensis (strain DSM 17343 / BCRC 17206 / CCUG 44338 / CIP 107171 / LMG 19424 / R1) (Ralstonia taiwanensis (strain LMG 19424)).